A 750-amino-acid chain; its full sequence is MIIRSPEPEVKILVDRDPVKTSFEEWARPGHFSRTIAKGPDTTTWIWNLHADAHDFDSHTSDLEEISRKIFSAHFGQLSIIFLWLSGMYFHGARFSNYEAWLSDPTHIGPSAQVVWPIVGQEILNGDVGGGFRGIQITSGFFQIWRASGITSELQLYCTAIGALVFAALMLFAGWFHYHKAAPKLAWFQDVESMLNHHLAGLLGLGSLSWAGHQVHVSLPINQFLNAGVDPKEIPLPHEFILNRDLLAQLYPSFAEGATPFFTLNWSKYAEFLTFRGGLDPVTGGLWLTDIAHHHLAIAILFLIAGHMYKTNWGIGHSLKDILEAHKGPFTGQGHKGLYEILTTSWHAQLSLNLAMLGSLTIVVAHHMYSMPPYPYLATDYGTQLSLFTHHMWIGGFLIVGAAAHAAIFMVRDYDPTTRYNDLLDRVLRHRDAIISHLNWVCIFLGFHSFGLYIHNDTMSALGRPQDMFSDTAIQLQPVFAQWIQNTHTLAPGATAPGATASTSLTWGGGDLVAVGGKVALLPIPLGTADFLVHHIHAFTIHVTVLILLKGVLFARSSRLIPDKANLGFRFPCDGPGRGGTCQVSAWDHVFLGLFWMYNSISVVIFHFSWKMQSDVWGTISDQGVVTHITGGNFAQSSITINGWLRDFLWAQASQVIQSYGSSLSAYGLLFLGAHFVWAFSLMFLFSGRGYWQELIESIVWAHNKLKVAPATQPRALSIVQGRAVGVTHYLLGGIATTWAFFLARIIAVG.

8 helical membrane-spanning segments follow: residues Ile-70 to Ala-93, Leu-156 to His-179, Leu-195 to Leu-219, Ile-291 to Tyr-309, Trp-346 to Tyr-369, Leu-385 to Val-411, Ala-433 to His-455, and Phe-531 to Leu-549. Residues Cys-573 and Cys-582 each contribute to the [4Fe-4S] cluster site. 2 helical membrane passes run His-589–Trp-610 and Leu-664–Phe-686. Residue His-675 participates in chlorophyll a' binding. The chlorophyll a site is built by Met-683 and Tyr-691. Trp-692 is a binding site for phylloquinone. A helical membrane pass occupies residues Ala-724 to Ala-744.

This sequence belongs to the PsaA/PsaB family. As to quaternary structure, the PsaA/B heterodimer binds the P700 chlorophyll special pair and subsequent electron acceptors. PSI consists of a core antenna complex that captures photons, and an electron transfer chain that converts photonic excitation into a charge separation. The eukaryotic PSI reaction center is composed of at least 11 subunits. The cofactor is P700 is a chlorophyll a/chlorophyll a' dimer, A0 is one or more chlorophyll a, A1 is one or both phylloquinones and FX is a shared 4Fe-4S iron-sulfur center..

It is found in the plastid. Its subcellular location is the chloroplast thylakoid membrane. It carries out the reaction reduced [plastocyanin] + hnu + oxidized [2Fe-2S]-[ferredoxin] = oxidized [plastocyanin] + reduced [2Fe-2S]-[ferredoxin]. Functionally, psaA and PsaB bind P700, the primary electron donor of photosystem I (PSI), as well as the electron acceptors A0, A1 and FX. PSI is a plastocyanin-ferredoxin oxidoreductase, converting photonic excitation into a charge separation, which transfers an electron from the donor P700 chlorophyll pair to the spectroscopically characterized acceptors A0, A1, FX, FA and FB in turn. Oxidized P700 is reduced on the lumenal side of the thylakoid membrane by plastocyanin. This Gossypium hirsutum (Upland cotton) protein is Photosystem I P700 chlorophyll a apoprotein A1.